The primary structure comprises 204 residues: FMN-dependent NADH:quinone oxidoreductase 1 (204 aa).

FMN is bound by residues serine 14, 20 to 22, and 99 to 102; these read SMS and MYNF.

The protein belongs to the azoreductase type 1 family. Homodimer. It depends on FMN as a cofactor.

The enzyme catalyses 2 a quinone + NADH + H(+) = 2 a 1,4-benzosemiquinone + NAD(+). The catalysed reaction is N,N-dimethyl-1,4-phenylenediamine + anthranilate + 2 NAD(+) = 2-(4-dimethylaminophenyl)diazenylbenzoate + 2 NADH + 2 H(+). In terms of biological role, quinone reductase that provides resistance to thiol-specific stress caused by electrophilic quinones. Functionally, also exhibits azoreductase activity. Catalyzes the reductive cleavage of the azo bond in aromatic azo compounds to the corresponding amines. This is FMN-dependent NADH:quinone oxidoreductase 1 from Hahella chejuensis (strain KCTC 2396).